The following is a 330-amino-acid chain: Malate dehydrogenase (330 aa).

12 to 18 (GAAGQIG) is an NAD(+) binding site. The substrate site is built by Arg93 and Arg99. NAD(+)-binding positions include Asn106, Gln113, and 130–132 (VGN). Asn132 and Arg163 together coordinate substrate. His188 (proton acceptor) is an active-site residue.

This sequence belongs to the LDH/MDH superfamily. MDH type 2 family.

It carries out the reaction (S)-malate + NAD(+) = oxaloacetate + NADH + H(+). In terms of biological role, catalyzes the reversible oxidation of malate to oxaloacetate. In Thermobifida fusca (strain YX), this protein is Malate dehydrogenase.